We begin with the raw amino-acid sequence, 149 residues long: SsrA-binding protein (149 aa).

The protein belongs to the SmpB family.

The protein localises to the cytoplasm. In terms of biological role, required for rescue of stalled ribosomes mediated by trans-translation. Binds to transfer-messenger RNA (tmRNA), required for stable association of tmRNA with ribosomes. tmRNA and SmpB together mimic tRNA shape, replacing the anticodon stem-loop with SmpB. tmRNA is encoded by the ssrA gene; the 2 termini fold to resemble tRNA(Ala) and it encodes a 'tag peptide', a short internal open reading frame. During trans-translation Ala-aminoacylated tmRNA acts like a tRNA, entering the A-site of stalled ribosomes, displacing the stalled mRNA. The ribosome then switches to translate the ORF on the tmRNA; the nascent peptide is terminated with the 'tag peptide' encoded by the tmRNA and targeted for degradation. The ribosome is freed to recommence translation, which seems to be the essential function of trans-translation. This chain is SsrA-binding protein, found in Anaplasma marginale (strain St. Maries).